The primary structure comprises 307 residues: Malate dehydrogenase (307 aa).

NAD(+)-binding positions include 8-13 (GAGNVG) and aspartate 32. Substrate is bound by residues arginine 81 and arginine 87. NAD(+)-binding positions include asparagine 94 and 117–119 (VTN). The substrate site is built by asparagine 119 and arginine 150. The Proton acceptor role is filled by histidine 174.

The protein belongs to the LDH/MDH superfamily.

It catalyses the reaction (S)-malate + NAD(+) = oxaloacetate + NADH + H(+). Catalyzes the reversible oxidation of malate to oxaloacetate. This is Malate dehydrogenase (mdh) from Methanosarcina acetivorans (strain ATCC 35395 / DSM 2834 / JCM 12185 / C2A).